Here is a 156-residue protein sequence, read N- to C-terminus: Large ribosomal subunit protein bL17 (156 aa).

Positions 127–156 (RATRAAASKKAAEEKAAEAAEEKDEAAEEK) are disordered. Residues 136-146 (KAAEEKAAEAA) are compositionally biased toward basic and acidic residues. Residues 147–156 (EEKDEAAEEK) show a composition bias toward acidic residues.

This sequence belongs to the bacterial ribosomal protein bL17 family. In terms of assembly, part of the 50S ribosomal subunit. Contacts protein L32.

The protein is Large ribosomal subunit protein bL17 of Corynebacterium urealyticum (strain ATCC 43042 / DSM 7109).